The following is a 336-amino-acid chain: Pyridoxal 5'-phosphate synthase subunit PdxS (336 aa).

Asp-62 is a D-ribose 5-phosphate binding site. The active-site Schiff-base intermediate with D-ribose 5-phosphate is the Lys-119. Gly-191 serves as a coordination point for D-ribose 5-phosphate. Lys-203 contacts D-glyceraldehyde 3-phosphate. Residues Gly-254 and 275–276 (GS) contribute to the D-ribose 5-phosphate site.

Belongs to the PdxS/SNZ family. In terms of assembly, in the presence of PdxT, forms a dodecamer of heterodimers.

The catalysed reaction is aldehydo-D-ribose 5-phosphate + D-glyceraldehyde 3-phosphate + L-glutamine = pyridoxal 5'-phosphate + L-glutamate + phosphate + 3 H2O + H(+). Its pathway is cofactor biosynthesis; pyridoxal 5'-phosphate biosynthesis. Functionally, catalyzes the formation of pyridoxal 5'-phosphate from ribose 5-phosphate (RBP), glyceraldehyde 3-phosphate (G3P) and ammonia. The ammonia is provided by the PdxT subunit. Can also use ribulose 5-phosphate and dihydroxyacetone phosphate as substrates, resulting from enzyme-catalyzed isomerization of RBP and G3P, respectively. In Pyrobaculum calidifontis (strain DSM 21063 / JCM 11548 / VA1), this protein is Pyridoxal 5'-phosphate synthase subunit PdxS.